The primary structure comprises 170 residues: Siroheme decarboxylase NirL subunit (170 aa).

It belongs to the Ahb/Nir family. In terms of assembly, probably forms a complex composed of NirD, NirL, NirG and NirH. All proteins are required for the total conversion of siroheme to didecarboxysiroheme.

The catalysed reaction is siroheme + 2 H(+) = 12,18-didecarboxysiroheme + 2 CO2. The protein operates within porphyrin-containing compound metabolism. Involved in heme d1 biosynthesis. Catalyzes the decarboxylation of siroheme into didecarboxysiroheme. This is Siroheme decarboxylase NirL subunit from Stutzerimonas stutzeri (Pseudomonas stutzeri).